The following is a 477-amino-acid chain: Inositol phosphosphingolipids phospholipase C (477 aa).

Residues 1-398 lie on the Cytoplasmic side of the membrane; that stretch reads MYNRKDRDVH…QRQKFFRGLH (398 aa). Glutamate 100 lines the Mg(2+) pocket. Histidine 334 serves as the catalytic Proton acceptor. The helical transmembrane segment at 399–417 threads the bilayer; it reads FWASILLLIASLVVTTFTA. Residues 418 to 424 lie on the Mitochondrial intermembrane side of the membrane; the sequence is NKAGWSS. Residues 425–449 form a helical membrane-spanning segment; sequence IFWVLFAIAVSISGTIDGAISFLFG. The Cytoplasmic segment spans residues 450 to 477; that stretch reads RSEIRALIEVEQEVLDAEHHLQTFLSEK.

It belongs to the neutral sphingomyelinase family. Mg(2+) is required as a cofactor.

Its subcellular location is the endoplasmic reticulum membrane. The protein resides in the mitochondrion outer membrane. The catalysed reaction is an N-acyl-(4R)-4-hydroxysphinganine-1-phosphoinositol + H2O = 1D-myo-inositol 1-phosphate + an N-acyl-(4R)-4-hydroxysphinganine + H(+). The enzyme catalyses a mannosylinositol-1-phospho-N-acyl-sphingoid base + H2O = mannosylinositol-1-phosphate + an N-acyl-sphingoid base + H(+). It catalyses the reaction an inositol phosphomannosylinositol-1-phospho-N-acyl-(4R)-4-hydroxysphinganine + H2O = mannosyldiinositol-1-phosphate + an N-acyl-(4R)-4-hydroxysphinganine + H(+). The protein operates within lipid metabolism; sphingolipid metabolism. With respect to regulation, activated through localization to mitochondria in specific growth phases. In terms of biological role, responsible for the hydrolysis of the phosphosphingolipids (IPS), inositol phosphorylceramide (IPC), mannosylinositol phosphorylceramide (MIPC), and mannosyldiinositol phosphorylceramide (M(IP)2C). Regulates sphingolipid metabolism in mitochondria, especially the formation of alpha-hydroxylated very long chain phytoceramides. The generated ceramides contribute to the normal function of mitochondria. Also active on sphingomyelin (SM), but this activity is probably not physiologically relevant. The protein is Inositol phosphosphingolipids phospholipase C of Saccharomyces cerevisiae (strain ATCC 204508 / S288c) (Baker's yeast).